The primary structure comprises 1077 residues: TSC22 domain family protein 1 (1077 aa).

The tract at residues 1-98 (MHQPPESTAA…SQAQLQGQPL (98 aa)) is required for interaction with TGFBR1 and promotion of TGF-beta signaling. Disordered stretches follow at residues 22 to 112 (MAHP…SGFQ), 125 to 283 (ISSN…VPSS), 458 to 492 (QTPT…SVGS), 842 to 874 (SSAA…GSLV), and 909 to 947 (QAIG…SDGS). The span at 58–70 (FPPPSLLQPPPPA) shows a compositional bias: pro residues. Positions 84-96 (SLNLLSQAQLQGQ) are enriched in low complexity. The segment covering 133-142 (EDTESYDDLD) has biased composition (acidic residues). Basic residues predominate over residues 216 to 240 (HPHHLHHHHHPHHGHHLHHGHHHSS). The residue at position 263 (Ser-263) is a Phosphoserine. A compositionally biased stretch (low complexity) spans 471–489 (TSGSSVSSSVSTLSHYTES). Residues 852 to 874 (VPTNLVPPQNIAQPPATQNGSLV) show a composition bias toward polar residues. Residues 933–947 (MSGDSGGMSAVSDGS) show a composition bias toward low complexity. Residues 1010–1031 (LKEQIKELIEKNSQLEQENNLL) are leucine-zipper. Residues 1042 to 1077 (QFQAQLQTGSPPATTQPQGTTQPPAQPASQGSGSTA) are disordered. The segment covering 1048–1077 (QTGSPPATTQPQGTTQPPAQPASQGSGSTA) has biased composition (low complexity).

It belongs to the TSC-22/Dip/Bun family. Forms homodimers. Forms heterodimers. Component of a complex composed of TSC22D1 (via N-terminus), TGFBR1 and TGFBR2; the interaction between TSC22D1 and TGFBR1 is inhibited by SMAD7 and promoted by TGFB1. Interacts with SMAD7; the interaction requires TGF-beta and the interaction is inhibited by TGFBR1. Interacts with TPT1/fortilin; interaction results in the destabilization of TSC22D1 protein and prevents TSC22D1-mediated apoptosis. Interacts with SMAD4 (via N-terminus). Interacts with ACVRL1/ALK1, ACVR1/ALK2, BMPR1A/ALK3, ACVR1B/ALK4, BMPR1B/ALK6, ACVR2A/ACTRII, and BMPR2. Interacts with SMAD6. Interacts with TFE3; the interaction is enhanced in the presence of TGF-beta. In terms of assembly, forms a heterodimer with TSC22D4/THG1. As to quaternary structure, forms a heterodimer with TSC22D4/THG1. Interacts with histone H1-2. Interacts with GNL3. In terms of tissue distribution, expressed in bone marrow cells (at protein level). Expressed in T-cells. Expressed in the brain. As to expression, expressed in the myoepithelial cells of the mammary gland ducts and alveoli, expression is consistent throughout pregnancy, lactation and involution (at protein level). Expressed in the cortex, medulla and papilla of the kidney. Expressed in the myoepithelial cells of the mammary gland, expression significantly increases in the secretory luminal epithelium of the mammary gland at the initiation of involution, with levels decreasing from day 3 of involution onwards (at protein level). Expressed in the cortex, medulla and papilla of the kidney.

The protein resides in the cytoplasm. The protein localises to the nucleus. It is found in the cell membrane. It localises to the mitochondrion. In terms of biological role, transcriptional repressor. Acts on the C-type natriuretic peptide (CNP) promoter. Acts to promote CASP3-mediated apoptosis. Positively regulates TGF-beta signaling by interacting with SMAD7 which inhibits binding of SMAD7 to TGFBR1, preventing recruitment of SMURF ubiquitin ligases to TGFBR1 and inhibiting SMURF-mediated ubiquitination and degradation of TGFBR1. Contributes to enhancement of TGF-beta signaling by binding to and modulating the transcription activator activity of SMAD4. Promotes TGF-beta-induced transcription of COL1A2; via its interaction with TFE3 at E-boxes in the gene proximal promoter. Plays a role in the repression of hematopoietic precursor cell growth. Promotes IL2 deprivation-induced apoptosis in T-lymphocytes, via repression of TSC22D3/GILZ transcription and activation of the caspase cascade. Functionally, may act to negatively regulate TGFB3 signaling and thereby inhibit cell death in mammary gland cells. Its function is as follows. Positively regulates cell death in response to TGFB3 during mammary gland involution. This chain is TSC22 domain family protein 1, found in Mus musculus (Mouse).